A 387-amino-acid polypeptide reads, in one-letter code: MTSEKKRVLIIGGGYGGCEVAKQLDSKFNVTVVERKQTFFHSVGSVRAVVEPELVKKIYIPYDKLLKNGKFIFGTVIEISPTLAKLEDGQELTFDYLVIATGSNSLAPFKAPLEKKSSSEILNYFQNFSQQIKQAKSILIVGGGAVACELVSEIVEKYPVKDSELVKKITIVHSGSKLVNPKMNDKFTNVVSKAMKKRNVEVILNDRITMPDEIKANLLNQTSPNIQISSQNYTTEKGVPIQADLIIWTVGIKTNSESYQSHFSNVINESGQLKVNLSCQVQGYNNVFAIGDCTDFDEFKTAYNAGYHAAIAAKAIDALSKGKSNDKLAKHKVSGPILSLSLGPQDGITQISPTMCLGSFATKMIKSKSLFIDRYISQLNNPKPLIQ.

FAD contacts are provided by residues 12-16, Arg47, and Asp292; that span reads GGGYG.

It belongs to the FAD-dependent oxidoreductase family. FAD serves as cofactor.

In terms of biological role, putative FAD-dependent oxidoreductase. This chain is Apoptosis-inducing factor homolog B (aifB), found in Dictyostelium discoideum (Social amoeba).